The following is a 469-amino-acid chain: Tubulin gamma-2 chain (469 aa).

Residue Ala-142–Gly-148 coordinates GTP.

Belongs to the tubulin family.

Its subcellular location is the cytoplasm. It localises to the cytoskeleton. The protein localises to the microtubule organizing center. Functionally, tubulin is the major constituent of microtubules. The gamma chain is found at microtubule organizing centers (MTOC) such as the spindle poles, suggesting that it is involved in the minus-end nucleation of microtubule assembly. The sequence is that of Tubulin gamma-2 chain (TUBG2) from Zea mays (Maize).